Reading from the N-terminus, the 582-residue chain is Zinc finger protein somi-1 (582 aa).

2 disordered regions span residues 179–251 (LRPE…NNTD) and 352–377 (SAEPMKRHRVEAHEKQSPKKKVKKEQ). A compositionally biased stretch (polar residues) spans 188-226 (TQKSTNGVHRSTSNSSAETLRNNSVSAATVSPSDDNSLN). The segment covering 227 to 244 (SPALTSSGSAGSGTPPLG) has biased composition (low complexity). Basic and acidic residues predominate over residues 352–368 (SAEPMKRHRVEAHEKQS). The segment at 454–477 (YICEDCDFVTVYKGNMKRHLNTCH) adopts a C2H2-type; Degenerate zinc-finger fold. Residues 513-582 (AHKANSSRGR…PPPPPPPMLL (70 aa)) form a disordered region. The span at 551–570 (LLESLASSSSSMGGYSNGNN) shows a compositional bias: low complexity. Over residues 572–582 (QPPPPPPPMLL) the composition is skewed to pro residues.

As to quaternary structure, may interact with swsn-9; the interaction promotes hypodermal differentiation. In terms of tissue distribution, expressed in hypodermal seam cells, the somatic gonad and vulval precursor cells, body wall muscle and head neurons.

The protein localises to the nucleus. Functionally, DNA-binding protein which binds to the promoters of let-60, lin-14 and lin-28, possibly to regulate genes involved in hypodermal and vulval development. Together with miRNAs mir-84 and let-7 may direct terminal differentiation of the seam cells, exit from the molting cycle, and vulva formation. Does not regulate the expression of mir-84. May promote hypodermal differentiation in association with swsn-9, a component of SWI/SNF chromatin remodeling complexes. This Caenorhabditis elegans protein is Zinc finger protein somi-1.